Reading from the N-terminus, the 116-residue chain is Large ribosomal subunit protein uL18 (116 aa).

It belongs to the universal ribosomal protein uL18 family. Part of the 50S ribosomal subunit; part of the 5S rRNA/L5/L18/L25 subcomplex. Contacts the 5S and 23S rRNAs.

In terms of biological role, this is one of the proteins that bind and probably mediate the attachment of the 5S RNA into the large ribosomal subunit, where it forms part of the central protuberance. In Psychrobacter arcticus (strain DSM 17307 / VKM B-2377 / 273-4), this protein is Large ribosomal subunit protein uL18.